Here is a 305-residue protein sequence, read N- to C-terminus: GMP synthase [glutamine-hydrolyzing] subunit B (305 aa).

Positions 2–184 constitute a GMPS ATP-PPase domain; the sequence is VKTEKFIQKS…LGLPPEIQHR (183 aa). Residue 29–35 participates in ATP binding; sequence SGGVDSS.

In terms of assembly, heterodimer composed of a glutamine amidotransferase subunit (A) and a GMP-binding subunit (B).

The enzyme catalyses XMP + L-glutamine + ATP + H2O = GMP + L-glutamate + AMP + diphosphate + 2 H(+). It functions in the pathway purine metabolism; GMP biosynthesis; GMP from XMP (L-Gln route): step 1/1. Catalyzes the synthesis of GMP from XMP. The polypeptide is GMP synthase [glutamine-hydrolyzing] subunit B (Methanoregula boonei (strain DSM 21154 / JCM 14090 / 6A8)).